The following is an 896-amino-acid chain: MAAIGWPGIVAIISVAISFIIMAADWVGPDITFTILLSWLTAFDGKIITVAKAAAGYGNTGLLTVIFLYWVAEGVTQTGGLELVMNYVLGRSRSVHWALVRSMFPVMVLSAFLNNTPCVTFMIPILMSWARRCGVPPKKLLIPLSYAAVLGGTCTSIGTSTNLVIVGMQDTRYNKQNKEDEAKFGMFDIAPYGVPYALMGFVFIILTQRFLLPGNSSRYAKDLLIAVRVLPSSPVVKKKLKDSGLRTQTGFSLAGLWRGGAMTRQVDPDTVLEANDILYCAGELDVVEFVGEEFGLGLVTAETERALTDGQAVGDSEATAFHDTGASPYKKLVQVTMTKTADLVGRTVREVSWQGRFGLIPVAIQRGNGREDGRLNDVVLAAGDVLILDTTPHFDEARDDFKINFEKLRFVKDGAAKEFVIGVKVKKNSEVVNKTVTAAGLRGVPGLFVLSVDRADGSSVDASDYLYKIQPGDTLWLAADVGAVGFLSKFPGLELVQQEQVDKTGTSILYRHLVQAAVSHKGPLVGKTVRDVRFRTLYNAAIVAVHREGVRVPLKVQDIVLQGGDVLLISCHTKWAEEHRMDKAFVLVQAVPDSSPPKRGRMAIGVLLVVGMVLTQIVGGLKEKEYIHLWPAAVLTAALMLLTGCMNADQARKAIMWDVYLTIAAAFGVSAALENTGVAGKVANAIISIGKSIGGDGPALIAIYVATAVMSELLTNNAAGAIMYPIAAIAGDQLKIPAVDISVAIMLGASAGFINPFSYQTNLMVYAAGNYSVREFATIGAPFQIWLMVVASFILCYMKQWKQVWIATWSITAFIVFVPALLTLLPHTVQNRMEAFFDRIAEAINPRAALQRRRSARAQSFGGKAMSVGSTESRTDGSSTPDVALTFIEMPKMGVR.

5 consecutive transmembrane segments (helical) span residues M1–I21, I47–Y69, V106–L126, L140–S160, and M186–L206. 4 consecutive RCK C-terminal domains span residues L212 to L296, T319 to N404, L408 to L493, and E499 to V586. 7 helical membrane passes run M602–K622, Y626–M646, A654–E674, A685–V705, L734–I754, F776–C796, and V804–L824. A disordered region spans residues R857–P881. The segment covering V868–P881 has biased composition (polar residues).

Belongs to the divalent anion:Na+ symporter (DASS) superfamily. Na+/sulfate symporter (TC 2.A.47.4) family.

The protein resides in the cell membrane. Its function is as follows. Na(+)/sulfate cotransporter with a probable low-affinity for sulfate. This is Probable sodium/sulfate cotransporter 3 (SLT3) from Chlamydomonas reinhardtii (Chlamydomonas smithii).